Reading from the N-terminus, the 417-residue chain is MDKLVIQGGVPLRGAIAVSGSKNAALPILMASILAEEPITYTNVPRLRDIFTTNKLLAILGCPAEFDGHTVTVTPCDLKPEAPYDLVKTMRASVLCLGPLLARLGEARVALPGGCAIGARPVDLHLTALEKMGATFDLDSGYIQGRCKKLRGAHIHFDFPTVGGTENLLMAATLAEGETILENVAREPEVVDLANFLIACGAKIEGHGSSVIKVQGVPRLGGCEYRIMPDRIEAGTFMVAAGITGGDLLLTDCPFEELEAVIAKLRDMGLIIEREGTRDVRVTHNGHLRARDVTTRPFPGFPTDMQAQIMALMTIASGAGVVEETIFENRFMHVPELVRMGADVKLSGHSAMVRGVQKLIGAPVMASDLRASASLVLAGLAAQGETHVQRIYHLDRGYERIEEKLNAVGARITRMPE.

22–23 lines the phosphoenolpyruvate pocket; the sequence is KN. Arg91 is a UDP-N-acetyl-alpha-D-glucosamine binding site. Cys115 (proton donor) is an active-site residue. Residue Cys115 is modified to 2-(S-cysteinyl)pyruvic acid O-phosphothioketal. UDP-N-acetyl-alpha-D-glucosamine is bound by residues 120–124, Asp304, and Ile326; that span reads RPVDL.

The protein belongs to the EPSP synthase family. MurA subfamily.

The protein localises to the cytoplasm. The catalysed reaction is phosphoenolpyruvate + UDP-N-acetyl-alpha-D-glucosamine = UDP-N-acetyl-3-O-(1-carboxyvinyl)-alpha-D-glucosamine + phosphate. The protein operates within cell wall biogenesis; peptidoglycan biosynthesis. Its function is as follows. Cell wall formation. Adds enolpyruvyl to UDP-N-acetylglucosamine. The chain is UDP-N-acetylglucosamine 1-carboxyvinyltransferase from Nitratidesulfovibrio vulgaris (strain DSM 19637 / Miyazaki F) (Desulfovibrio vulgaris).